Consider the following 393-residue polypeptide: MDGSGQQTDTMMSDAGAEQPPPAPQPVAGMDNIPATLSYGGRFIQYNIFGNIFEVTAKYKPPILPIGKGAYGIVCSALNSETIENVAIKKIANAFDNKIDAKRTLREIKLLRHMDHENIVAIRDIIPPPQREAFNDVYIAYELMDTDLHQIIRSNQGLSEEHCQYFLYQILRGLKYIHSANVLHRDLKPSNLLLNANCDLKICDFGLARVTSETDFMTEYVVTRWYRPPELLLNSSDYTAAIDIWSVGCIFTELMDRKPLFPGRDHVHQLRLIMELIGTPSEAEMEFLNENAKRYIRQLPLYRRQSFTEKFPHVHPAAIDLVEKMLTFDPRRRITVEGALAHPYLNSLHDISDEPICMTPFSFDFEQHALTEEQMKELIYRESLAFNPEYQHM.

Polar residues predominate over residues 1 to 11 (MDGSGQQTDTM). Positions 1–31 (MDGSGQQTDTMMSDAGAEQPPPAPQPVAGMD) are disordered. The Protein kinase domain maps to 60–345 (KPPILPIGKG…VEGALAHPYL (286 aa)). Residues 66–74 (IGKGAYGIV) and Lys-89 each bind ATP. The active-site Proton acceptor is the Asp-186. Positions 218–220 (TEY) match the TXY motif.

The protein belongs to the protein kinase superfamily. CMGC Ser/Thr protein kinase family. MAP kinase subfamily. As to quaternary structure, interacts with SIPKK.

The catalysed reaction is L-tyrosyl-[protein] + ATP = O-phospho-L-tyrosyl-[protein] + ADP + H(+). It carries out the reaction L-seryl-[protein] + ATP = O-phospho-L-seryl-[protein] + ADP + H(+). It catalyses the reaction L-threonyl-[protein] + ATP = O-phospho-L-threonyl-[protein] + ADP + H(+). Its activity is regulated as follows. Activated by threonine and tyrosine phosphorylation. Its function is as follows. Phosphorylates myelin basic protein (MBP) in vitro. May be involved in disease resistance. The polypeptide is Mitogen-activated protein kinase SIPK (Nicotiana tabacum (Common tobacco)).